The primary structure comprises 352 residues: Holliday junction branch migration complex subunit RuvB (352 aa).

The segment at 4–191 is large ATPase domain (RuvB-L); sequence TDKFSAPDRV…FGIVARLEFY (188 aa). ATP is bound by residues Leu-30, Arg-31, Gly-72, Lys-75, Thr-76, Thr-77, 138 to 140, Arg-181, Tyr-191, and Arg-228; that span reads EDY. Thr-76 lines the Mg(2+) pocket. Residues 192 to 262 form a small ATPAse domain (RuvB-S) region; it reads TAEELARIVT…IADAALAMLD (71 aa). The tract at residues 265–352 is head domain (RuvB-H); that stretch reads RVGFDLMDRK…GDSGDLIDGE (88 aa). DNA-binding residues include Arg-301, Arg-320, and Arg-325.

The protein belongs to the RuvB family. Homohexamer. Forms an RuvA(8)-RuvB(12)-Holliday junction (HJ) complex. HJ DNA is sandwiched between 2 RuvA tetramers; dsDNA enters through RuvA and exits via RuvB. An RuvB hexamer assembles on each DNA strand where it exits the tetramer. Each RuvB hexamer is contacted by two RuvA subunits (via domain III) on 2 adjacent RuvB subunits; this complex drives branch migration. In the full resolvosome a probable DNA-RuvA(4)-RuvB(12)-RuvC(2) complex forms which resolves the HJ.

It is found in the cytoplasm. The catalysed reaction is ATP + H2O = ADP + phosphate + H(+). In terms of biological role, the RuvA-RuvB-RuvC complex processes Holliday junction (HJ) DNA during genetic recombination and DNA repair, while the RuvA-RuvB complex plays an important role in the rescue of blocked DNA replication forks via replication fork reversal (RFR). RuvA specifically binds to HJ cruciform DNA, conferring on it an open structure. The RuvB hexamer acts as an ATP-dependent pump, pulling dsDNA into and through the RuvAB complex. RuvB forms 2 homohexamers on either side of HJ DNA bound by 1 or 2 RuvA tetramers; 4 subunits per hexamer contact DNA at a time. Coordinated motions by a converter formed by DNA-disengaged RuvB subunits stimulates ATP hydrolysis and nucleotide exchange. Immobilization of the converter enables RuvB to convert the ATP-contained energy into a lever motion, pulling 2 nucleotides of DNA out of the RuvA tetramer per ATP hydrolyzed, thus driving DNA branch migration. The RuvB motors rotate together with the DNA substrate, which together with the progressing nucleotide cycle form the mechanistic basis for DNA recombination by continuous HJ branch migration. Branch migration allows RuvC to scan DNA until it finds its consensus sequence, where it cleaves and resolves cruciform DNA. This chain is Holliday junction branch migration complex subunit RuvB, found in Cupriavidus pinatubonensis (strain JMP 134 / LMG 1197) (Cupriavidus necator (strain JMP 134)).